Here is a 180-residue protein sequence, read N- to C-terminus: NAD(P)H-quinone oxidoreductase subunit I, chloroplastic (180 aa).

2 4Fe-4S ferredoxin-type domains span residues 55-84 and 95-124; these read GRIH…VDWR and LNYS…MTEE. Cysteine 64, cysteine 67, cysteine 70, cysteine 74, cysteine 104, cysteine 107, cysteine 110, and cysteine 114 together coordinate [4Fe-4S] cluster.

It belongs to the complex I 23 kDa subunit family. In terms of assembly, NDH is composed of at least 16 different subunits, 5 of which are encoded in the nucleus. [4Fe-4S] cluster is required as a cofactor.

The protein resides in the plastid. The protein localises to the chloroplast thylakoid membrane. It carries out the reaction a plastoquinone + NADH + (n+1) H(+)(in) = a plastoquinol + NAD(+) + n H(+)(out). The enzyme catalyses a plastoquinone + NADPH + (n+1) H(+)(in) = a plastoquinol + NADP(+) + n H(+)(out). In terms of biological role, NDH shuttles electrons from NAD(P)H:plastoquinone, via FMN and iron-sulfur (Fe-S) centers, to quinones in the photosynthetic chain and possibly in a chloroplast respiratory chain. The immediate electron acceptor for the enzyme in this species is believed to be plastoquinone. Couples the redox reaction to proton translocation, and thus conserves the redox energy in a proton gradient. In Drimys granadensis, this protein is NAD(P)H-quinone oxidoreductase subunit I, chloroplastic.